A 558-amino-acid chain; its full sequence is AP2-like ethylene-responsive transcription factor AIL5 (558 aa).

Low complexity predominate over residues 1–54 (MKNNNNKSSSSSSYDSSLSPSSSSSSHQNWLSFSLSNNNNNFNSSSNPNLTSST). 3 disordered regions span residues 1–65 (MKNN…PSHL), 74–93 (SPVE…ATAV), and 166–195 (HSSE…KNVE). 2 DNA-binding regions (AP2/ERF) span residues 203–269 (IYRG…TNFP) and 305–363 (MYRG…TNFD). A disordered region spans residues 387–406 (SPATAAADKTVDLSPSDSPS).

The protein belongs to the AP2/ERF transcription factor family. AP2 subfamily. As to expression, expressed in roots, seedlings, inflorescence, and siliques. Also detected at low levels in leaves.

It localises to the nucleus. Probably acts as a transcriptional activator. Binds to the GCC-box pathogenesis-related promoter element. May be involved in the regulation of gene expression by stress factors and by components of stress signal transduction pathways. Involved in the regulation of floral organs size. The sequence is that of AP2-like ethylene-responsive transcription factor AIL5 from Arabidopsis thaliana (Mouse-ear cress).